A 473-amino-acid chain; its full sequence is ATP synthase subunit beta (473 aa).

An ATP-binding site is contributed by 158–165 (GGAGVGKT).

It belongs to the ATPase alpha/beta chains family. As to quaternary structure, F-type ATPases have 2 components, CF(1) - the catalytic core - and CF(0) - the membrane proton channel. CF(1) has five subunits: alpha(3), beta(3), gamma(1), delta(1), epsilon(1). CF(0) has three main subunits: a(1), b(2) and c(9-12). The alpha and beta chains form an alternating ring which encloses part of the gamma chain. CF(1) is attached to CF(0) by a central stalk formed by the gamma and epsilon chains, while a peripheral stalk is formed by the delta and b chains.

Its subcellular location is the cell membrane. It carries out the reaction ATP + H2O + 4 H(+)(in) = ADP + phosphate + 5 H(+)(out). Its function is as follows. Produces ATP from ADP in the presence of a proton gradient across the membrane. The catalytic sites are hosted primarily by the beta subunits. This Geobacillus stearothermophilus (Bacillus stearothermophilus) protein is ATP synthase subunit beta.